The sequence spans 465 residues: Siroheme synthase (465 aa).

The precorrin-2 dehydrogenase /sirohydrochlorin ferrochelatase stretch occupies residues 1–203 (MEYLPLFHNL…GRTAEAERLL (203 aa)). Residues 22–23 (EI) and 43–44 (PS) contribute to the NAD(+) site. At serine 128 the chain carries Phosphoserine. Residues 216 to 465 (GEVYLVGAGP…WFEGAQAAGR (250 aa)) form a uroporphyrinogen-III C-methyltransferase region. Residue proline 225 participates in S-adenosyl-L-methionine binding. Aspartate 248 acts as the Proton acceptor in catalysis. Lysine 270 acts as the Proton donor in catalysis. S-adenosyl-L-methionine contacts are provided by residues 301–303 (GGD), isoleucine 306, 331–332 (TA), methionine 383, and glycine 412.

This sequence in the N-terminal section; belongs to the precorrin-2 dehydrogenase / sirohydrochlorin ferrochelatase family. It in the C-terminal section; belongs to the precorrin methyltransferase family.

The enzyme catalyses uroporphyrinogen III + 2 S-adenosyl-L-methionine = precorrin-2 + 2 S-adenosyl-L-homocysteine + H(+). It catalyses the reaction precorrin-2 + NAD(+) = sirohydrochlorin + NADH + 2 H(+). It carries out the reaction siroheme + 2 H(+) = sirohydrochlorin + Fe(2+). It functions in the pathway cofactor biosynthesis; adenosylcobalamin biosynthesis; precorrin-2 from uroporphyrinogen III: step 1/1. The protein operates within cofactor biosynthesis; adenosylcobalamin biosynthesis; sirohydrochlorin from precorrin-2: step 1/1. It participates in porphyrin-containing compound metabolism; siroheme biosynthesis; precorrin-2 from uroporphyrinogen III: step 1/1. Its pathway is porphyrin-containing compound metabolism; siroheme biosynthesis; siroheme from sirohydrochlorin: step 1/1. It functions in the pathway porphyrin-containing compound metabolism; siroheme biosynthesis; sirohydrochlorin from precorrin-2: step 1/1. Its function is as follows. Multifunctional enzyme that catalyzes the SAM-dependent methylations of uroporphyrinogen III at position C-2 and C-7 to form precorrin-2 via precorrin-1. Then it catalyzes the NAD-dependent ring dehydrogenation of precorrin-2 to yield sirohydrochlorin. Finally, it catalyzes the ferrochelation of sirohydrochlorin to yield siroheme. The sequence is that of Siroheme synthase from Stutzerimonas stutzeri (strain A1501) (Pseudomonas stutzeri).